Consider the following 358-residue polypeptide: Photosystem II protein D1 3 (358 aa).

The next 3 membrane-spanning stretches (helical) occupy residues 28–45, 117–132, and 141–155; these read YIGW…AATT, HFLI…QWEL, and WICV…AAMA. Residue His117 participates in chlorophyll a binding. Tyr125 is a pheophytin a binding site. Residues Asp169 and Glu188 each coordinate [CaMn4O5] cluster. A helical membrane pass occupies residues 196–217; the sequence is FHMLGVAGVFGGSLFSAMHGSL. His197 is a chlorophyll a binding site. A quinone-binding positions include His214 and 263-264; that span reads SF. Residue His214 coordinates Fe cation. His271 contributes to the Fe cation binding site. A helical transmembrane segment spans residues 273 to 287; the sequence is LLGAWPVVGIWFTSM. Positions 331, 332, 341, and 343 each coordinate [CaMn4O5] cluster. Residues 344–358 constitute a propeptide that is removed on maturation; that stretch reads TVESTPVALQAPAIG.

This sequence belongs to the reaction center PufL/M/PsbA/D family. PSII is composed of 1 copy each of membrane proteins PsbA, PsbB, PsbC, PsbD, PsbE, PsbF, PsbH, PsbI, PsbJ, PsbK, PsbL, PsbM, PsbT, PsbX, PsbY, PsbZ, Psb30/Ycf12, peripheral proteins PsbO, CyanoQ (PsbQ), PsbU, PsbV and a large number of cofactors. It forms dimeric complexes. The D1/D2 heterodimer binds P680, chlorophylls that are the primary electron donor of PSII, and subsequent electron acceptors. It shares a non-heme iron and each subunit binds pheophytin, quinone, additional chlorophylls, carotenoids and lipids. D1 provides most of the ligands for the Mn4-Ca-O5 cluster of the oxygen-evolving complex (OEC). There is also a Cl(-1) ion associated with D1 and D2, which is required for oxygen evolution. The PSII complex binds additional chlorophylls, carotenoids and specific lipids. serves as cofactor. In terms of processing, tyr-160 forms a radical intermediate that is referred to as redox-active TyrZ, YZ or Y-Z. Post-translationally, C-terminally processed by CtpA; processing is essential to allow assembly of the oxygen-evolving complex and thus photosynthetic growth.

It localises to the cellular thylakoid membrane. The catalysed reaction is 2 a plastoquinone + 4 hnu + 2 H2O = 2 a plastoquinol + O2. Functionally, photosystem II (PSII) is a light-driven water:plastoquinone oxidoreductase that uses light energy to abstract electrons from H(2)O, generating O(2) and a proton gradient subsequently used for ATP formation. It consists of a core antenna complex that captures photons, and an electron transfer chain that converts photonic excitation into a charge separation. The D1/D2 (PsbA/PsbD) reaction center heterodimer binds P680, the primary electron donor of PSII as well as several subsequent electron acceptors. The chain is Photosystem II protein D1 3 from Synechococcus sp. (strain CC9311).